The primary structure comprises 946 residues: Bifunctional lysine-specific demethylase and histidyl-hydroxylase NO66 (946 aa).

The segment at 14–435 (YRGSATSKNY…TSAASKKNTV (422 aa)) is disordered. 2 stretches are compositionally biased toward polar residues: residues 17 to 28 (SATSKNYVQKGT) and 37 to 46 (AKNNNRNLAS). The segment covering 59-73 (SGSYSDGDNGSSSSS) has biased composition (low complexity). Positions 99–110 (TLNNHSSQSSPE) are enriched in polar residues. The segment covering 117–128 (ESLKRRNDEAEG) has biased composition (basic and acidic residues). Over residues 169–186 (TLNSHSSQSSPETPANTR) the composition is skewed to polar residues. Over residues 187–198 (ESLKRRTDEAEG) the composition is skewed to basic and acidic residues. The segment covering 239–256 (TLNSHSYQSSPETPANTR) has biased composition (polar residues). Residues 257 to 268 (ESLKRRTDEAEG) are compositionally biased toward basic and acidic residues. Thr-309 is modified (phosphothreonine). A compositionally biased stretch (polar residues) spans 309-327 (TLNSHSSQSSPETPANTRE). Positions 328-338 (SLNRRNYEAEG) are enriched in basic and acidic residues. Position 339 is a phosphoserine (Ser-339). A compositionally biased stretch (polar residues) spans 379-397 (TLNSHSSQSSPETPANTRE). Residues 398–408 (SLNRRNYEAEG) are compositionally biased toward basic and acidic residues. Residues 416-433 (RTSSTPVGQSTSAASKKN) show a composition bias toward polar residues. Positions 606–742 (NPSSYLVQLR…NLMEKLMPLV (137 aa)) constitute a JmjC domain. 3 residues coordinate Fe cation: His-646, Asp-648, and His-708.

This sequence belongs to the ROX family. NO66 subfamily. It depends on Fe(2+) as a cofactor.

It is found in the nucleus. The enzyme catalyses N(6),N(6)-dimethyl-L-lysyl(36)-[histone H3] + 2 2-oxoglutarate + 2 O2 = L-lysyl(36)-[histone H3] + 2 formaldehyde + 2 succinate + 2 CO2. Oxygenase that can act as both a histone lysine demethylase and a ribosomal histidine hydroxylase. Specifically demethylates 'Lys-4' (H3K4me) and 'Lys-36' (H3K36me) of histone H3, thereby playing a central role in histone code. The protein is Bifunctional lysine-specific demethylase and histidyl-hydroxylase NO66 of Drosophila pseudoobscura pseudoobscura (Fruit fly).